A 1257-amino-acid chain; its full sequence is Receptor tyrosine-protein kinase erbB-2 (1257 aa).

Residues 1–22 form the signal peptide; sequence MELAAWCRWGFLLALLPPGIAG. The Extracellular segment spans residues 23–654; sequence TQVCTGTDMK…PAEQRASPVT (632 aa). The cysteines at positions 26 and 53 are disulfide-linked. N-linked (GlcNAc...) asparagine glycans are attached at residues Asn-68 and Asn-188. 16 cysteine pairs are disulfide-bonded: Cys-163/Cys-193, Cys-196/Cys-205, Cys-200/Cys-213, Cys-221/Cys-228, Cys-225/Cys-236, Cys-237/Cys-245, Cys-241/Cys-253, Cys-256/Cys-265, Cys-269/Cys-296, Cys-300/Cys-312, Cys-316/Cys-332, Cys-335/Cys-339, Cys-343/Cys-368, Cys-476/Cys-506, Cys-513/Cys-522, and Cys-517/Cys-530. An N-linked (GlcNAc...) asparagine glycan is attached at Asn-260. Residue Asn-532 is glycosylated (N-linked (GlcNAc...) asparagine). 8 disulfide bridges follow: Cys-533–Cys-542, Cys-546–Cys-562, Cys-565–Cys-578, Cys-569–Cys-586, Cys-589–Cys-598, Cys-602–Cys-625, Cys-628–Cys-636, and Cys-632–Cys-644. An N-linked (GlcNAc...) asparagine glycan is attached at Asn-573. The N-linked (GlcNAc...) asparagine glycan is linked to Asn-631. A helical membrane pass occupies residues 655-677; it reads FIIATVVGVLLFLILVVVVGILI. The required for interaction with KPNB1 and EEA1 stretch occupies residues 678-691; that stretch reads KRRRQKIRKYTMRR. The Nuclear localization signal signature appears at 678-691; sequence KRRRQKIRKYTMRR. Residues 678–1257 lie on the Cytoplasmic side of the membrane; the sequence is KRRRQKIRKY…PEYLGLDVPV (580 aa). The Protein kinase domain maps to 722–989; sequence LRKVKVLGSG…RMARDPQRFV (268 aa). ATP is bound by residues 728–736 and Lys-755; that span reads LGSGAFGTV. The active-site Proton acceptor is Asp-847. Phosphotyrosine is present on Tyr-879. Positions 1029–1181 are disordered; it reads QQGFFSPDPT…PKTLSPGKNG (153 aa). Phosphoserine is present on residues Ser-1056, Ser-1080, Ser-1085, and Ser-1109. At Tyr-1114 the chain carries Phosphotyrosine. Tyr-1141 is subject to Phosphotyrosine; by autocatalysis. Positions 1149–1163 are enriched in pro residues; that stretch reads PQPPLTPEGPLPPVR. The residue at position 1168 (Thr-1168) is a Phosphothreonine. The interaction with PIK3C2B stretch occupies residues 1197–1199; it reads EYL. Tyr-1198 is modified (phosphotyrosine). The tract at residues 1200–1257 is disordered; that stretch reads VPREGTASPPHPSPAFSPAFDNLYYWDQNSSEQGPPPSNFEGTPTAENPEYLGLDVPV. Residue Tyr-1250 is modified to Phosphotyrosine; by autocatalysis.

This sequence belongs to the protein kinase superfamily. Tyr protein kinase family. EGF receptor subfamily. Homodimer. Heterodimer with EGFR, ERBB3 and ERBB4. Part of a complex with EGFR and either PIK3C2A or PIK3C2B. May interact with PIK3C2B when phosphorylated on Tyr-1198. Interacts with PRKCABP and PLXNB1. Interacts (when phosphorylated on Tyr-1250) with MEMO1. Interacts with MUC1. Interacts (when phosphorylated on Tyr-1141) with GRB7 (via SH2 domain). Interacts (when phosphorylated on Tyr-1250) with ERBIN Interacts with SRC, KPNB1, RANBP2, EEA1, CRM1, CLTC, PTK6, RPA194, MYOC and ACTB. Interacts with HSP90AA1 and HSP90AB1; the interaction suppresses ERBB2 kinase activity. Interacts with SORL1; this interaction regulates ERBB2 subcellular distribution by promoting its recycling after internalization from endosomes back to the plasma membrane, hence stimulates ERBB2-mediated signaling. Interacts with SH3BGRL. Interacts with ROR1. Post-translationally, autophosphorylated. Autophosphorylation occurs in trans, i.e. one subunit of the dimeric receptor phosphorylates tyrosine residues on the other subunit. Ligand-binding increases phosphorylation on tyrosine residues. Signaling via SEMA4C promotes phosphorylation at Tyr-1250. Dephosphorylated by PTPN12.

Its subcellular location is the cell membrane. The protein localises to the cell projection. The protein resides in the ruffle membrane. It localises to the early endosome. It is found in the cytoplasm. Its subcellular location is the perinuclear region. The protein localises to the nucleus. The catalysed reaction is L-tyrosyl-[protein] + ATP = O-phospho-L-tyrosyl-[protein] + ADP + H(+). Protein tyrosine kinase that is part of several cell surface receptor complexes, but that apparently needs a coreceptor for ligand binding. Essential component of a neuregulin-receptor complex, although neuregulins do not interact with it alone. GP30 is a potential ligand for this receptor. Regulates outgrowth and stabilization of peripheral microtubules (MTs). Upon ERBB2 activation, the MEMO1-RHOA-DIAPH1 signaling pathway elicits the phosphorylation and thus the inhibition of GSK3B at cell membrane. This prevents the phosphorylation of APC and CLASP2, allowing its association with the cell membrane. In turn, membrane-bound APC allows the localization of MACF1 to the cell membrane, which is required for microtubule capture and stabilization. Interacts (preferentially with the tyrosine phosphorylated form) with CPNE3; this interaction occurs at the cell membrane and is increased in a growth factor heregulin-dependent manner. Functionally, in the nucleus is involved in transcriptional regulation. Associates with the 5'-TCAAATTC-3' sequence in the PTGS2/COX-2 promoter and activates its transcription. Implicated in transcriptional activation of CDKN1A; the function involves STAT3 and SRC. Involved in the transcription of rRNA genes by RNA Pol I and enhances protein synthesis and cell growth. The protein is Receptor tyrosine-protein kinase erbB-2 (Erbb2) of Rattus norvegicus (Rat).